The chain runs to 181 residues: Ribosome maturation factor RimM (181 aa).

A PRC barrel domain is found at 99-172 (EDEFYQVDLI…FLIVDPMAAG (74 aa)).

The protein belongs to the RimM family. Binds ribosomal protein uS19.

It is found in the cytoplasm. In terms of biological role, an accessory protein needed during the final step in the assembly of 30S ribosomal subunit, possibly for assembly of the head region. Essential for efficient processing of 16S rRNA. May be needed both before and after RbfA during the maturation of 16S rRNA. It has affinity for free ribosomal 30S subunits but not for 70S ribosomes. The sequence is that of Ribosome maturation factor RimM from Bartonella tribocorum (strain CIP 105476 / IBS 506).